We begin with the raw amino-acid sequence, 372 residues long: L-selectin (372 aa).

Residues 1–28 (MVFPWRCEGTYWGSRNILKLWVWTLLCC) form the signal peptide. Residues 29-38 (DFLIHHGTHC) constitute a propeptide that is removed on maturation. Residues 39 to 332 (WTYHYSEKPM…FSKIKEGDYN (294 aa)) lie on the Extracellular side of the membrane. The 101-residue stretch at 55–155 (KFCKQNYTDL…ACHKRKAALC (101 aa)) folds into the C-type lectin domain. Intrachain disulfides connect Cys57–Cys155, Cys128–Cys147, Cys128–Cys160, Cys160–Cys171, Cys165–Cys180, Cys182–Cys191, Cys197–Cys241, Cys227–Cys254, Cys259–Cys303, and Cys289–Cys316. N-linked (GlcNAc...) asparagine glycosylation is found at Asn60 and Asn104. Glu118, Asn120, Glu126, Asn143, and Asp144 together coordinate Ca(2+). An EGF-like domain is found at 156-192 (YTASCQPGSCNGRGECVETINNHTCICDAGYYGPQCQ). Asn177 carries an N-linked (GlcNAc...) asparagine glycan. 2 Sushi domains span residues 195–256 (VQCE…ICQV) and 257–318 (VQCE…ICQE). N-linked (GlcNAc...) asparagine glycans are attached at residues Asn216, Asn226, Asn246, Asn278, Asn288, Asn308, and Asn320. The helical transmembrane segment at 333-355 (PLFIPVAVMVTAFSGLAFLIWLA) threads the bilayer. Residues 356–372 (RRLKKGKKSQERMDDPY) are Cytoplasmic-facing.

This sequence belongs to the selectin/LECAM family. Interaction with SELPLG/PSGL1 and PODXL2 is required for promoting recruitment and rolling of leukocytes. This interaction is dependent on the sialyl Lewis X glycan modification of SELPLG and PODXL2, and tyrosine sulfation modifications of SELPLG. Sulfation on 'Tyr-51' of SELPLG is important for L-selectin binding. N-glycosylated. Predominantly expressed in lymphoid tissue.

Its subcellular location is the cell membrane. In terms of biological role, calcium-dependent lectin that mediates cell adhesion by binding to glycoproteins on neighboring cells. Mediates the adherence of lymphocytes to endothelial cells of high endothelial venules in peripheral lymph nodes. Promotes initial tethering and rolling of leukocytes in endothelia. This is L-selectin (Sell) from Mus musculus (Mouse).